The chain runs to 261 residues: tRNA 5-carboxymethoxyuridine methyltransferase (261 aa).

Residues Arg26, 52 to 53 (GG), Asp73, 102 to 103 (AQ), and His119 contribute to the S-adenosyl-L-methionine site.

This sequence belongs to the class I-like SAM-binding methyltransferase superfamily. CmoM family. Homodimer.

The catalysed reaction is 5-carboxymethoxyuridine(34) in tRNA + S-adenosyl-L-methionine = 5-methoxycarbonylmethoxyuridine(34) in tRNA + S-adenosyl-L-homocysteine. Catalyzes the methylation of 5-carboxymethoxyuridine (cmo5U) to form 5-methoxycarbonylmethoxyuridine (mcmo5U) at position 34 in tRNAs. The polypeptide is tRNA 5-carboxymethoxyuridine methyltransferase (Escherichia coli O157:H7).